A 442-amino-acid polypeptide reads, in one-letter code: D-serine dehydratase (442 aa).

Lys-118 bears the N6-(pyridoxal phosphate)lysine mark.

It belongs to the serine/threonine dehydratase family. DsdA subfamily. In terms of assembly, monomer. Pyridoxal 5'-phosphate serves as cofactor.

The catalysed reaction is D-serine = pyruvate + NH4(+). This Escherichia coli (strain K12 / MC4100 / BW2952) protein is D-serine dehydratase.